The following is a 508-amino-acid chain: Light-independent protochlorophyllide reductase subunit B (508 aa).

D36 is a binding site for [4Fe-4S] cluster. Catalysis depends on D294, which acts as the Proton donor. Position 429–430 (429–430 (GM)) interacts with substrate.

It belongs to the ChlB/BchB/BchZ family. Protochlorophyllide reductase is composed of three subunits; ChlL, ChlN and ChlB. Forms a heterotetramer of two ChlB and two ChlN subunits. [4Fe-4S] cluster is required as a cofactor.

The enzyme catalyses chlorophyllide a + oxidized 2[4Fe-4S]-[ferredoxin] + 2 ADP + 2 phosphate = protochlorophyllide a + reduced 2[4Fe-4S]-[ferredoxin] + 2 ATP + 2 H2O. Its pathway is porphyrin-containing compound metabolism; chlorophyll biosynthesis (light-independent). Its function is as follows. Component of the dark-operative protochlorophyllide reductase (DPOR) that uses Mg-ATP and reduced ferredoxin to reduce ring D of protochlorophyllide (Pchlide) to form chlorophyllide a (Chlide). This reaction is light-independent. The NB-protein (ChlN-ChlB) is the catalytic component of the complex. This is Light-independent protochlorophyllide reductase subunit B from Thermosynechococcus vestitus (strain NIES-2133 / IAM M-273 / BP-1).